A 332-amino-acid polypeptide reads, in one-letter code: Ribosomal RNA small subunit methyltransferase C (332 aa).

It belongs to the methyltransferase superfamily. RsmC family. Monomer.

The protein resides in the cytoplasm. It carries out the reaction guanosine(1207) in 16S rRNA + S-adenosyl-L-methionine = N(2)-methylguanosine(1207) in 16S rRNA + S-adenosyl-L-homocysteine + H(+). Specifically methylates the guanine in position 1207 of 16S rRNA in the 30S particle. This Pseudomonas aeruginosa (strain LESB58) protein is Ribosomal RNA small subunit methyltransferase C.